We begin with the raw amino-acid sequence, 471 residues long: Putative F-box protein At5g36200 (471 aa).

Positions 1 to 46 (MAMSDLPNDLVEEIISRVPVKSIRAVSSTCKNWNTLSNDHSFTRKL) constitute an F-box domain.

This is Putative F-box protein At5g36200 from Arabidopsis thaliana (Mouse-ear cress).